Reading from the N-terminus, the 191-residue chain is MYGPKDHGWIEVVAGPMYSGKTEELIRRIRRAEIAKQKVQVFKPEIDNRYSKQDVVSHAGDKIQSVPVKSSKEILEKLLDDTDVIGIDEAQFFDDSLVEIVSKIANNNRRVICAGLDMDFKGEPFGPMPKLMAIAEFVDKIQAVCMVCNNPATRTQRLINGKPAKKSDPVVLIGAQESYEARCRKCHCVPR.

ATP is bound by residues 15-22 (GPMYSGKT) and 88-91 (DEAQ). E89 functions as the Proton acceptor in the catalytic mechanism. 4 residues coordinate Zn(2+): C145, C148, C183, and C186.

The protein belongs to the thymidine kinase family. In terms of assembly, homotetramer.

It localises to the cytoplasm. The enzyme catalyses thymidine + ATP = dTMP + ADP + H(+). In Clostridium botulinum (strain Kyoto / Type A2), this protein is Thymidine kinase.